Consider the following 132-residue polypeptide: Agouti-signaling protein (132 aa).

The first 22 residues, 1 to 22 (MDVTXLLLATLLVFLCCFAAYS), serve as a signal peptide directing secretion. Asn39 is a glycosylation site (N-linked (GlcNAc...) asparagine). Residues 62–93 (ISRKEAENKRSSKKEASKQKVARPRTPLSVPC) form a disordered region. Residues 64–79 (RKEAENKRSSKKEASK) show a composition bias toward basic and acidic residues. Disulfide bonds link Cys93–Cys108, Cys100–Cys114, Cys107–Cys125, Cys111–Cys132, and Cys116–Cys123. The Agouti domain maps to 93–132 (CVSTRGSCKPPAPACCHPCASCQCRFFRSACSCRVINVNC).

The protein localises to the secreted. Its function is as follows. Involved in the regulation of melanogenesis. The binding of ASP to MC1R precludes alpha-MSH initiated signaling and thus blocks production of cAMP, leading to a down-regulation of eumelanogenesis (brown/black pigment) and thus increasing synthesis of pheomelanin (yellow/red pigment). The polypeptide is Agouti-signaling protein (ASIP) (Leontopithecus chrysomelas (Golden-headed lion tamarin)).